Consider the following 255-residue polypeptide: Triosephosphate isomerase (255 aa).

9-11 (NWK) provides a ligand contact to substrate. Histidine 95 serves as the catalytic Electrophile. Glutamate 167 acts as the Proton acceptor in catalysis. Residues glycine 173, serine 212, and 233 to 234 (GG) contribute to the substrate site.

Belongs to the triosephosphate isomerase family. As to quaternary structure, homodimer.

The protein localises to the cytoplasm. It carries out the reaction D-glyceraldehyde 3-phosphate = dihydroxyacetone phosphate. The protein operates within carbohydrate biosynthesis; gluconeogenesis. It functions in the pathway carbohydrate degradation; glycolysis; D-glyceraldehyde 3-phosphate from glycerone phosphate: step 1/1. Involved in the gluconeogenesis. Catalyzes stereospecifically the conversion of dihydroxyacetone phosphate (DHAP) to D-glyceraldehyde-3-phosphate (G3P). In Erwinia tasmaniensis (strain DSM 17950 / CFBP 7177 / CIP 109463 / NCPPB 4357 / Et1/99), this protein is Triosephosphate isomerase.